Here is a 363-residue protein sequence, read N- to C-terminus: Galanin receptor 2a (363 aa).

The Extracellular portion of the chain corresponds to 1-23 (MNASQQIHVFSSHWKVESVIISL). The chain crosses the membrane as a helical span at residues 24 to 44 (IFSMIFLVGTVGNCLVLAVLI). At 45–54 (RNGQMNTKST) the chain is on the cytoplasmic side. The helical transmembrane segment at 55–75 (NLFILNLGLADLCFIVFCVPL) threads the bilayer. The Extracellular segment spans residues 76-94 (QATIYTMDEWVFGAFVCKA). An intrachain disulfide couples cysteine 92 to cysteine 169. The helical transmembrane segment at 95-115 (VHFIIYLTMYASIFTLAAVSL) threads the bilayer. Over 116 to 135 (DRYLAIRYPLRSRETRTPRN) the chain is Cytoplasmic. A helical membrane pass occupies residues 136–156 (ALTSISLVWALSLFFSSPYLS). Topologically, residues 157 to 179 (YYQQMDLDGTTVCIPAWSVHHRQ) are extracellular. The chain crosses the membrane as a helical span at residues 180–200 (AMDICTFIFGYLIPVLILGIT). At 201–230 (YARTIRYLWTSVDPMQDMSESRKAKRKVTK) the chain is on the cytoplasmic side. A helical membrane pass occupies residues 231–251 (MIIIVAVLFCLCWLPHHLVIL). At 252 to 268 (CMWFGHFPLNHTTYVLR) the chain is on the extracellular side. Residues 269–289 (ILSHLVAYANSCLNPIVYALV) form a helical membrane-spanning segment. The Cytoplasmic segment spans residues 290 to 363 (SKHFRKGFKK…TSAFMTFNVT (74 aa)).

This sequence belongs to the G-protein coupled receptor 1 family. As to expression, expressed in neurons in the ventral area of the interpeduncular nucleus (IPN) where expression often overlaps with spx1.

The protein resides in the membrane. Its function is as follows. Receptor for the hormone galanin. Receptor for the hormones spexin-1 and spexin-2. The polypeptide is Galanin receptor 2a (Danio rerio (Zebrafish)).